The chain runs to 159 residues: Phosphopantetheine adenylyltransferase (159 aa).

Thr9 lines the substrate pocket. Residues 9 to 10 (TF) and His17 each bind ATP. Substrate-binding residues include Lys41, Leu73, and Arg87. Residues 88–90 (GLR), Glu98, and 123–129 (YSFISST) contribute to the ATP site.

It belongs to the bacterial CoaD family. As to quaternary structure, homohexamer. Requires Mg(2+) as cofactor.

The protein localises to the cytoplasm. The catalysed reaction is (R)-4'-phosphopantetheine + ATP + H(+) = 3'-dephospho-CoA + diphosphate. It participates in cofactor biosynthesis; coenzyme A biosynthesis; CoA from (R)-pantothenate: step 4/5. In terms of biological role, reversibly transfers an adenylyl group from ATP to 4'-phosphopantetheine, yielding dephospho-CoA (dPCoA) and pyrophosphate. This is Phosphopantetheine adenylyltransferase from Pseudomonas syringae pv. tomato (strain ATCC BAA-871 / DC3000).